The sequence spans 736 residues: Prospero homeobox protein 1 (736 aa).

The span at 103-135 shows a compositional bias: polar residues; the sequence is KNGGTEPSFQASGLSSTGSEVHQEDVCSNSSRD. The segment at 103–146 is disordered; that stretch reads KNGGTEPSFQASGLSSTGSEVHQEDVCSNSSRDSPQECLSPFGR. Residues 163-168 carry the Nuclear localization signal motif; that stretch reads RAKRAR. Disordered stretches follow at residues 180–220, 261–301, 319–344, 445–465, and 499–518; these read PRVA…QQQS, YDST…EMCE, EIGENKPKREGPKEKDQGPNSFHPEG, NSSDQPASAPPAGGHHASLHQ, and PSASFPGKERASPESLDLTR. Positions 264 to 274 are enriched in acidic residues; that stretch reads TDSENDEDGNL. The segment covering 319–335 has biased composition (basic and acidic residues); it reads EIGENKPKREGPKEKDQ. Residues 450-460 show a composition bias toward low complexity; it reads PASAPPAGGHH. Residues 505–518 are compositionally biased toward basic and acidic residues; the sequence is GKERASPESLDLTR. In terms of domain architecture, Prospero-type homeo spans 576–634; that stretch reads QEGLSPNHLKKAKLMFFYTRYPSSNMLKTYFSDVKFNRCITSQLIKWFSNFREFYYIQM. The tract at residues 576–734 is homeo-Prospero; it reads QEGLSPNHLK…KSPNCLQELL (159 aa). The region spanning 635-734 is the Prospero domain; the sequence is EKYARQAIND…KSPNCLQELL (100 aa).

It belongs to the Prospero homeodomain family. Expressed most actively in the developing lens and midgut and at lower levels in the developing brain, heart, muscle and retina.

The protein resides in the nucleus. Its function is as follows. Transcription factor which may be involved in developmental processes such as cell fate determination, gene transcriptional regulation and progenitor cell regulation in a number of organs. May be essential in the development and function of the eye. May play a role in the regulation of the circadian rhythm by repressing the expression of clock genes. This Gallus gallus (Chicken) protein is Prospero homeobox protein 1 (PROX1).